The following is a 723-amino-acid chain: Homeobox protein HAT3.1 (723 aa).

Over residues 1–10 (MYKAVSKRVT) the composition is skewed to basic residues. 2 disordered regions span residues 1 to 94 (MYKA…GSHR) and 135 to 173 (KRAQ…QVRE). The segment covering 11 to 23 (RSSGSGLKQTNVD) has biased composition (polar residues). Basic and acidic residues predominate over residues 58–83 (LHHEIMDHGKGNEEQKPTPQTVKKDS). The PHD-type zinc-finger motif lies at 265 to 322 (DIFCAKCGSKDLSVDNDIILCDGFCDRGFHQYCLEPPLRKEDIPPDDEGWLCPGCDCK). Disordered stretches follow at residues 357–628 (GGQN…KTQR) and 680–723 (VEKL…RRRK). The segment covering 365–407 (LPSDDSDDEEYDPDCLNDNENDEDGSDDNEESENEDGSSDETE) has biased composition (acidic residues). The span at 417-427 (ESFKEGKDIMK) shows a compositional bias: basic and acidic residues. A compositionally biased stretch (acidic residues) spans 435 to 453 (DDSEDDDYDPDAPTCDDDK). Basic and acidic residues-rich tracts occupy residues 518–530 (RNVE…KLYD) and 547–556 (DKTARMGKED). A compositionally biased stretch (basic residues) spans 580 to 589 (KKLIRKSKRA). Positions 614–673 (SSSSACKQTDPKTQRLYISFQENQYPDKATKESLAKELQMTVKQVNNWFKHRRWSINSKP) form a DNA-binding region, homeobox. Basic and acidic residues predominate over residues 680 to 690 (VEKLKTGKEGE). Polar residues predominate over residues 695-705 (VAGSSKQTMET).

This sequence belongs to the PHD-associated homeobox family. Primarily detected in root tissue.

The protein resides in the nucleus. In terms of biological role, binds only to large DNA fragments. Recognizes a DNA fragment carrying 8 copies of box7 motif of the light-induced cab-E promoter of Nicotiana plumbaginifolia. Also recognizes the box7m1 motif. This is Homeobox protein HAT3.1 (HAT3.1) from Arabidopsis thaliana (Mouse-ear cress).